Here is a 780-residue protein sequence, read N- to C-terminus: Cyclin-F (780 aa).

Residues 20-28 carry the Nuclear localization signal 1 motif; the sequence is KRRIKRRPR. The 48-residue stretch at 29–76 folds into the F-box domain; the sequence is NLTILSLPEDVLFHILKWLSVGDILAVRAVHSHLKYLVDNHASVWASA. Positions 288-405 constitute a Cyclin N-terminal domain; the sequence is QASQAVNKQQ…EIISALEGKI (118 aa). Short sequence motifs (d box) lie at residues 310–313, 343–346, and 349–352; these read RYIL, RRRL, and RYKL. Disordered regions lie at residues 544-594, 651-733, and 745-780; these read QESP…AELS, QESS…STKP, and CRPP…FLKL. The short motif at 568–574 is the Nuclear localization signal 2 element; sequence RRSKRKR. The interval 582–761 is PEST; sequence RGSFVTTPTA…ESGAHQQPVK (180 aa). Polar residues predominate over residues 585 to 594; the sequence is FVTTPTAELS. Composition is skewed to low complexity over residues 695-708 and 719-731; these read SGYS…PISS and STSV…HSST. The short motif at 762–765 is the D box 4 element; it reads RQNL.

It belongs to the cyclin family. Cyclin AB subfamily. As to quaternary structure, component of the SCF(CCNF) complex consisting of CUL1, RBX1, SKP1 and CCNF. Interacts with SKP1. Interacts with CUL1. Interacts with CCNB1; interaction is required for nuclear localization of CCNB1. Interacts with CCP110; this interaction leads to CCP110 ubiquitination and degradation via the proteasome pathway. Interacts (via the Cyclin N-terminal domain) with MYBL2/BMYB. Interacts with FZR1/CDH1 (via N-terminus). Interacts with RRM2 (via Cy motif and when phosphorylated at 'Thr-33'); the interaction occurs exclusively in G2 and early M. Interacts with CDC6 (via Cy motif); the interaction takes place during G2 and M phase. In terms of processing, degraded when the spindle assembly checkpoint is activated during the G2-M transition. Degradation is not dependent on the proteasome or ubiquitin and depends on the C-terminal PEST sequence. Phosphorylated just before cells enter into mitosis. Post-translationally, ubiquitinated by the anaphase-promoting complex (APC/C); leading to its degradation by the proteasome.

The protein localises to the nucleus. Its subcellular location is the cytoplasm. It is found in the perinuclear region. The protein resides in the cytoskeleton. It localises to the microtubule organizing center. The protein localises to the centrosome. Its subcellular location is the centriole. Functionally, substrate recognition component of a SCF (SKP1-CUL1-F-box protein) E3 ubiquitin-protein ligase complex which mediates the ubiquitination and subsequent proteasomal degradation of target proteins. The SCF(CCNF) E3 ubiquitin-protein ligase complex is an integral component of the ubiquitin proteasome system (UPS) and links proteasome degradation to the cell cycle. Mediates the substrate recognition and the proteasomal degradation of various target proteins involved in the regulation of cell cycle progression and in the maintenance of genome stability. Mediates the ubiquitination and subsequent proteasomal degradation of CP110 during G2 phase, thereby acting as an inhibitor of centrosome reduplication. In G2, mediates the ubiquitination and proteasomal degradation of CDC6, thereby suppressing DNA re-replication and preventing genome instability. Involved in the ubiquitination and degradation of the substrate adapter CDH1 of the anaphase-promoting complex (APC/C), thereby acting as an antagonist of APC/C in regulating G1 progression and S phase entry. May play a role in the G2 cell cycle checkpoint control after DNA damage, possibly by promoting the ubiquitination of MYBL2/BMYB. In Rattus norvegicus (Rat), this protein is Cyclin-F (Ccnf).